A 546-amino-acid polypeptide reads, in one-letter code: Probable protein kinase UbiB (546 aa).

The Protein kinase domain occupies 124 to 502; sequence DFSVEPLASA…HVRQGQSRYL (379 aa). ATP contacts are provided by residues 130 to 138 and Lys-153; that span reads LASASIAQV. Asp-288 functions as the Proton acceptor in the catalytic mechanism. Helical transmembrane passes span 501–521 and 522–542; these read YLFG…IHRP and EWGM…LIGW.

It belongs to the ABC1 family. UbiB subfamily.

Its subcellular location is the cell inner membrane. It functions in the pathway cofactor biosynthesis; ubiquinone biosynthesis [regulation]. Is probably a protein kinase regulator of UbiI activity which is involved in aerobic coenzyme Q (ubiquinone) biosynthesis. This is Probable protein kinase UbiB from Klebsiella pneumoniae (strain 342).